The primary structure comprises 932 residues: 2-oxoglutarate dehydrogenase E1 component (932 aa).

This sequence belongs to the alpha-ketoglutarate dehydrogenase family. In terms of assembly, homodimer. Part of the 2-oxoglutarate dehydrogenase (OGDH) complex composed of E1 (2-oxoglutarate dehydrogenase), E2 (dihydrolipoamide succinyltransferase) and E3 (dihydrolipoamide dehydrogenase); the complex contains multiple copies of the three enzymatic components (E1, E2 and E3). The cofactor is thiamine diphosphate.

It catalyses the reaction N(6)-[(R)-lipoyl]-L-lysyl-[protein] + 2-oxoglutarate + H(+) = N(6)-[(R)-S(8)-succinyldihydrolipoyl]-L-lysyl-[protein] + CO2. In terms of biological role, E1 component of the 2-oxoglutarate dehydrogenase (OGDH) complex which catalyzes the decarboxylation of 2-oxoglutarate, the first step in the conversion of 2-oxoglutarate to succinyl-CoA and CO(2). This is 2-oxoglutarate dehydrogenase E1 component from Staphylococcus aureus (strain USA300).